Here is a 425-residue protein sequence, read N- to C-terminus: Serine hydroxymethyltransferase (425 aa).

Residues Leu124 and 128 to 130 (GHL) contribute to the (6S)-5,6,7,8-tetrahydrofolate site. The residue at position 233 (Lys233) is an N6-(pyridoxal phosphate)lysine.

This sequence belongs to the SHMT family. Homodimer. Pyridoxal 5'-phosphate serves as cofactor.

It localises to the cytoplasm. The enzyme catalyses (6R)-5,10-methylene-5,6,7,8-tetrahydrofolate + glycine + H2O = (6S)-5,6,7,8-tetrahydrofolate + L-serine. It participates in one-carbon metabolism; tetrahydrofolate interconversion. Its pathway is amino-acid biosynthesis; glycine biosynthesis; glycine from L-serine: step 1/1. Its function is as follows. Catalyzes the reversible interconversion of serine and glycine with tetrahydrofolate (THF) serving as the one-carbon carrier. This reaction serves as the major source of one-carbon groups required for the biosynthesis of purines, thymidylate, methionine, and other important biomolecules. Also exhibits THF-independent aldolase activity toward beta-hydroxyamino acids, producing glycine and aldehydes, via a retro-aldol mechanism. This is Serine hydroxymethyltransferase from Clavibacter michiganensis subsp. michiganensis (strain NCPPB 382).